Reading from the N-terminus, the 479-residue chain is Putative F-box/LRR-repeat protein At1g56400 (479 aa).

In terms of domain architecture, F-box spans 12–60; that stretch reads QDRLSNLPDVLLIMIISCLSFKECIRTSVLAKRWRYLCRETRNISFKET. LRR repeat units follow at residues 99 to 129, 139 to 167, 186 to 211, 228 to 254, 287 to 312, 342 to 367, and 419 to 446; these read YFSI…VLDF, CASR…KIYS, IGWI…SINY, VFES…KYSG, RTKL…SVCP, LHVM…TFDI, and LKFL…ELYM.

This chain is Putative F-box/LRR-repeat protein At1g56400, found in Arabidopsis thaliana (Mouse-ear cress).